The following is a 372-amino-acid chain: Serine proteinase inhibitor 1 (372 aa).

The protein belongs to the serpin family. Poxviruses subfamily.

The protein resides in the host cytoplasm. Functionally, plays a role in mediating viral host range. May act to inhibit a caspase independent form of apoptosis to allow efficient virus replication in infected cells. This chain is Serine proteinase inhibitor 1 (OPG208), found in Homo sapiens (Human).